The following is a 1736-amino-acid chain: Collagen alpha-2(XI) chain (1736 aa).

Positions 1–27 (MERCSRCHRLLLFLPLVLGLSAAPGWA) are cleaved as a signal peptide. Residues 57-228 (DVAYRVARPA…QSCGQKDLEC (172 aa)) form the Laminin G-like domain. The tract at residues 215 to 486 (QAAYQSCGQK…ILQQARLALR (272 aa)) is nonhelical region. Disordered regions lie at residues 228–270 (CERE…PTES), 364–465 (LSAE…DKGP), and 485–1538 (LRGP…GSPA). Positions 258–269 (PQSQEPQKQPTE) are enriched in polar residues. Collagen-like domains are found at residues 399–447 (GPPG…GPPG), 487–545 (GPPG…ADGA), and 546–583 (RGMPGEPGMKGDRGFDGLPGLPGEKGQRGDTGAQGLPG). The segment at 487–1500 (GPPGPMGYTG…PGHPGPPGEV (1014 aa)) is triple-helical region. Residues 497–533 (RPGPLGQPGSPGLKGESGDLGPQGPRGPQGLTGPPGK) are compositionally biased toward low complexity. A compositionally biased stretch (pro residues) spans 615–624 (KGPPGIPGPP). Over residues 650–668 (QQGTPGAQGLPGPQGAIGP) the composition is skewed to low complexity. Residues 682–737 (GMPGSDGLPGHPGKEGPPGTKGNQGPSGPQGPLGYPGPRGVKGVDGIRGLKGHKGE) form the Collagen-like 4 domain. Over residues 765–774 (RGEDGPEGPK) the composition is skewed to basic and acidic residues. Low complexity-rich tracts occupy residues 776-789 (RTGPTGDPGPTGLM) and 842-861 (PTGPRGQRGPRGATGKSGAK). 5 Collagen-like domains span residues 868 to 924 (GPHG…PGPP), 967 to 1025 (GDPG…AAGS), 1026 to 1055 (GGPIGPPGRPGPQGPPGAAGEKGVPGEKGP), 1056 to 1086 (IGPTGRDGVQGPVGLPGPAGPPGVAGEDGDK), and 1114 to 1172 (GPVG…ETGD). The segment covering 994-1003 (GTAGGPGLKG) has biased composition (gly residues). A compositionally biased stretch (pro residues) spans 1029–1040 (IGPPGRPGPQGP). Low complexity-rich tracts occupy residues 1115–1133 (PVGQPGAAGADGEPGARGP) and 1155–1164 (IGLQGLPGPS). The span at 1176–1187 (MGPPGPPGPRGP) shows a compositional bias: pro residues. A compositionally biased stretch (low complexity) spans 1188–1197 (AGPNGADGPQ). Positions 1198–1207 (GSPGGVGNLG) are enriched in gly residues. A compositionally biased stretch (low complexity) spans 1217–1230 (ESGSPGVQGEPGVK). Basic and acidic residues predominate over residues 1232-1241 (PRGERGEKGE). Residues 1256-1272 (PTGDNGPKGNPGPVGFP) are compositionally biased toward low complexity. Positions 1287–1296 (DGAKGDRGED) are enriched in basic and acidic residues. Residues 1376 to 1386 (QQGRPGATGQA) are compositionally biased toward low complexity. Pro residues-rich tracts occupy residues 1388 to 1397 (PPGPVGPPGL) and 1457 to 1467 (PGGPPGLPGPS). Collagen-like domains are found at residues 1393 to 1447 (GPPG…GETG) and 1448 to 1499 (IPGA…PPGE). Residues 1469–1481 (PKGAKGATGPAGP) show a composition bias toward low complexity. A propeptide spans 1501 to 1736 (IQPLPIQMPK…VLLGPVCFMG (236 aa)) (C-terminal propeptide). Residues 1541 to 1735 (EEIFGSLDSL…GVLLGPVCFM (195 aa)) enclose the Fibrillar collagen NC1 domain. An intrachain disulfide couples C1571 to C1603. Residues D1589, N1591, Q1592, C1594, and D1597 each coordinate Ca(2+). N1604 carries an N-linked (GlcNAc...) asparagine glycan. 2 disulfide bridges follow: C1612–C1733 and C1655–C1689.

This sequence belongs to the fibrillar collagen family. In terms of assembly, trimers composed of three different chains: alpha 1(XI), alpha 2(XI), and alpha 3(XI). Alpha 3(XI) is a post-translational modification of alpha 1(II). Alpha 1(V) can also be found instead of alpha 3(XI)=1(II). Prolines at the third position of the tripeptide repeating unit (G-X-Y) are hydroxylated in some or all of the chains.

It is found in the secreted. It localises to the extracellular space. Its subcellular location is the extracellular matrix. May play an important role in fibrillogenesis by controlling lateral growth of collagen II fibrils. This chain is Collagen alpha-2(XI) chain (Col11a2), found in Mus musculus (Mouse).